A 156-amino-acid polypeptide reads, in one-letter code: Small ribosomal subunit protein uS7 (156 aa).

The protein belongs to the universal ribosomal protein uS7 family. Part of the 30S ribosomal subunit. Contacts proteins S9 and S11.

One of the primary rRNA binding proteins, it binds directly to 16S rRNA where it nucleates assembly of the head domain of the 30S subunit. Is located at the subunit interface close to the decoding center, probably blocks exit of the E-site tRNA. The sequence is that of Small ribosomal subunit protein uS7 from Dictyoglomus turgidum (strain DSM 6724 / Z-1310).